We begin with the raw amino-acid sequence, 319 residues long: Beta-ketoacyl-[acyl-carrier-protein] synthase III (319 aa).

Residues C115 and H246 contribute to the active site. An ACP-binding region spans residues 247–251; that stretch reads QANLR. N276 is a catalytic residue.

The protein belongs to the thiolase-like superfamily. FabH family. As to quaternary structure, homodimer.

The protein resides in the cytoplasm. The enzyme catalyses malonyl-[ACP] + acetyl-CoA + H(+) = 3-oxobutanoyl-[ACP] + CO2 + CoA. It functions in the pathway lipid metabolism; fatty acid biosynthesis. Catalyzes the condensation reaction of fatty acid synthesis by the addition to an acyl acceptor of two carbons from malonyl-ACP. Catalyzes the first condensation reaction which initiates fatty acid synthesis and may therefore play a role in governing the total rate of fatty acid production. Possesses both acetoacetyl-ACP synthase and acetyl transacylase activities. Its substrate specificity determines the biosynthesis of branched-chain and/or straight-chain of fatty acids. The chain is Beta-ketoacyl-[acyl-carrier-protein] synthase III from Coxiella burnetii (strain RSA 331 / Henzerling II).